Here is a 215-residue protein sequence, read N- to C-terminus: Phosphatidylserine decarboxylase proenzyme (215 aa).

The active-site Schiff-base intermediate with substrate; via pyruvic acid is Ser-186. Ser-186 is subject to Pyruvic acid (Ser); by autocatalysis.

This sequence belongs to the phosphatidylserine decarboxylase family. PSD-A subfamily. Heterodimer of a large membrane-associated beta subunit and a small pyruvoyl-containing alpha subunit. Pyruvate serves as cofactor. Is synthesized initially as an inactive proenzyme. Formation of the active enzyme involves a self-maturation process in which the active site pyruvoyl group is generated from an internal serine residue via an autocatalytic post-translational modification. Two non-identical subunits are generated from the proenzyme in this reaction, and the pyruvate is formed at the N-terminus of the alpha chain, which is derived from the carboxyl end of the proenzyme. The post-translation cleavage follows an unusual pathway, termed non-hydrolytic serinolysis, in which the side chain hydroxyl group of the serine supplies its oxygen atom to form the C-terminus of the beta chain, while the remainder of the serine residue undergoes an oxidative deamination to produce ammonia and the pyruvoyl prosthetic group on the alpha chain.

The protein localises to the cell membrane. The enzyme catalyses a 1,2-diacyl-sn-glycero-3-phospho-L-serine + H(+) = a 1,2-diacyl-sn-glycero-3-phosphoethanolamine + CO2. Its pathway is phospholipid metabolism; phosphatidylethanolamine biosynthesis; phosphatidylethanolamine from CDP-diacylglycerol: step 2/2. In terms of biological role, catalyzes the formation of phosphatidylethanolamine (PtdEtn) from phosphatidylserine (PtdSer). This Pelagibacter ubique (strain HTCC1062) protein is Phosphatidylserine decarboxylase proenzyme.